The chain runs to 275 residues: Phosphonoacetaldehyde hydrolase (275 aa).

Asp15 serves as the catalytic Nucleophile. Asp15 and Ala17 together coordinate Mg(2+). Lys56 functions as the Schiff-base intermediate with substrate in the catalytic mechanism. Residue Asp189 participates in Mg(2+) binding.

It belongs to the HAD-like hydrolase superfamily. PhnX family. Homodimer. Mg(2+) is required as a cofactor.

The catalysed reaction is phosphonoacetaldehyde + H2O = acetaldehyde + phosphate + H(+). Involved in phosphonate degradation. The protein is Phosphonoacetaldehyde hydrolase of Pseudomonas aeruginosa (strain UCBPP-PA14).